Consider the following 507-residue polypeptide: Maturase K (507 aa).

The protein belongs to the intron maturase 2 family. MatK subfamily.

Its subcellular location is the plastid. It localises to the chloroplast. Usually encoded in the trnK tRNA gene intron. Probably assists in splicing its own and other chloroplast group II introns. The chain is Maturase K from Asimina triloba (Pawpaw).